A 303-amino-acid polypeptide reads, in one-letter code: GTPase Era (303 aa).

The Era-type G domain occupies 9–176; the sequence is KSGFVSIIGR…VEQIVEHMEE (168 aa). A G1 region spans residues 17-24; it reads GRPNVGKS. 17–24 is a GTP binding site; sequence GRPNVGKS. Positions 43–47 are G2; it reads QTTRN. Positions 64–67 are G3; the sequence is DTPG. GTP is bound by residues 64–68 and 126–129; these read DTPGI and NKID. The G4 stretch occupies residues 126-129; the sequence is NKID. Positions 155–157 are G5; sequence ISA. In terms of domain architecture, KH type-2 spans 199 to 284; the sequence is IREKVLHLTK…YLELWVKVQK (86 aa).

Belongs to the TRAFAC class TrmE-Era-EngA-EngB-Septin-like GTPase superfamily. Era GTPase family. As to quaternary structure, monomer.

It is found in the cytoplasm. The protein localises to the cell membrane. In terms of biological role, an essential GTPase that binds both GDP and GTP, with rapid nucleotide exchange. Plays a role in 16S rRNA processing and 30S ribosomal subunit biogenesis and possibly also in cell cycle regulation and energy metabolism. The polypeptide is GTPase Era (Shouchella clausii (strain KSM-K16) (Alkalihalobacillus clausii)).